A 245-amino-acid chain; its full sequence is PF03932 family protein CutC (245 aa).

It belongs to the CutC family.

Its subcellular location is the cytoplasm. This Rhizobium meliloti (strain 1021) (Ensifer meliloti) protein is PF03932 family protein CutC.